A 351-amino-acid polypeptide reads, in one-letter code: Holliday junction branch migration complex subunit RuvB (351 aa).

The interval Met-1 to Thr-22 is disordered. Residues Ser-2 to Tyr-185 are large ATPase domain (RuvB-L). ATP is bound by residues Leu-24, Arg-25, Gly-66, Lys-69, Thr-70, Thr-71, Glu-132–Phe-134, Arg-175, Tyr-185, and Arg-222. Residue Thr-70 participates in Mg(2+) binding. Positions Thr-186–Glu-256 are small ATPAse domain (RuvB-S). The segment at Ala-259–Asp-351 is head domain (RuvB-H). Arg-295, Arg-314, and Arg-319 together coordinate DNA.

It belongs to the RuvB family. As to quaternary structure, homohexamer. Forms an RuvA(8)-RuvB(12)-Holliday junction (HJ) complex. HJ DNA is sandwiched between 2 RuvA tetramers; dsDNA enters through RuvA and exits via RuvB. An RuvB hexamer assembles on each DNA strand where it exits the tetramer. Each RuvB hexamer is contacted by two RuvA subunits (via domain III) on 2 adjacent RuvB subunits; this complex drives branch migration. In the full resolvosome a probable DNA-RuvA(4)-RuvB(12)-RuvC(2) complex forms which resolves the HJ.

It is found in the cytoplasm. It carries out the reaction ATP + H2O = ADP + phosphate + H(+). Functionally, the RuvA-RuvB-RuvC complex processes Holliday junction (HJ) DNA during genetic recombination and DNA repair, while the RuvA-RuvB complex plays an important role in the rescue of blocked DNA replication forks via replication fork reversal (RFR). RuvA specifically binds to HJ cruciform DNA, conferring on it an open structure. The RuvB hexamer acts as an ATP-dependent pump, pulling dsDNA into and through the RuvAB complex. RuvB forms 2 homohexamers on either side of HJ DNA bound by 1 or 2 RuvA tetramers; 4 subunits per hexamer contact DNA at a time. Coordinated motions by a converter formed by DNA-disengaged RuvB subunits stimulates ATP hydrolysis and nucleotide exchange. Immobilization of the converter enables RuvB to convert the ATP-contained energy into a lever motion, pulling 2 nucleotides of DNA out of the RuvA tetramer per ATP hydrolyzed, thus driving DNA branch migration. The RuvB motors rotate together with the DNA substrate, which together with the progressing nucleotide cycle form the mechanistic basis for DNA recombination by continuous HJ branch migration. Branch migration allows RuvC to scan DNA until it finds its consensus sequence, where it cleaves and resolves cruciform DNA. This chain is Holliday junction branch migration complex subunit RuvB, found in Bradyrhizobium diazoefficiens (strain JCM 10833 / BCRC 13528 / IAM 13628 / NBRC 14792 / USDA 110).